A 373-amino-acid polypeptide reads, in one-letter code: Chaperone protein DnaJ (373 aa).

One can recognise a J domain in the interval 5 to 70; that stretch reads DYYEVLGVHR…QQRVIYDQYG (66 aa). The segment at 136 to 214 adopts a CR-type zinc-finger fold; the sequence is GLETKIQIPR…CHGSGRVRGK (79 aa). Residues Cys-149, Cys-152, Cys-166, Cys-169, Cys-188, Cys-191, Cys-202, and Cys-205 each contribute to the Zn(2+) site. 4 CXXCXGXG motif repeats span residues 149-156, 166-173, 188-195, and 202-209; these read CGTCDGIG, CPTCQGAG, CPECNGEG, and CEECHGSG.

It belongs to the DnaJ family. As to quaternary structure, homodimer. Zn(2+) serves as cofactor.

The protein localises to the cytoplasm. In terms of biological role, participates actively in the response to hyperosmotic and heat shock by preventing the aggregation of stress-denatured proteins and by disaggregating proteins, also in an autonomous, DnaK-independent fashion. Unfolded proteins bind initially to DnaJ; upon interaction with the DnaJ-bound protein, DnaK hydrolyzes its bound ATP, resulting in the formation of a stable complex. GrpE releases ADP from DnaK; ATP binding to DnaK triggers the release of the substrate protein, thus completing the reaction cycle. Several rounds of ATP-dependent interactions between DnaJ, DnaK and GrpE are required for fully efficient folding. Also involved, together with DnaK and GrpE, in the DNA replication of plasmids through activation of initiation proteins. This is Chaperone protein DnaJ from Syntrophotalea carbinolica (strain DSM 2380 / NBRC 103641 / GraBd1) (Pelobacter carbinolicus).